The following is a 775-amino-acid chain: Aconitate hydratase, mitochondrial (775 aa).

The N-terminal 25 residues, 1–25 (MLTTLARASAMLLGARGFASAADLD), are a transit peptide targeting the mitochondrion. Residues Gln-95 and 188–190 (DSH) contribute to the substrate site. Asn-337 is a glycosylation site (N-linked (GlcNAc...) asparagine). Cys-381 contacts [4Fe-4S] cluster. A glycan (N-linked (GlcNAc...) asparagine) is linked at Asn-383. Cys-444 and Cys-447 together coordinate [4Fe-4S] cluster. Position 470 (Arg-470) interacts with substrate. An N-linked (GlcNAc...) asparagine glycan is attached at Asn-471. Substrate is bound by residues Arg-475 and Arg-603. Asn-608 is a glycosylation site (N-linked (GlcNAc...) asparagine). 666-667 (SR) contacts substrate. 2 N-linked (GlcNAc...) asparagine glycosylation sites follow: Asn-754 and Asn-763.

This sequence belongs to the aconitase/IPM isomerase family. Monomer. It depends on [4Fe-4S] cluster as a cofactor.

Its subcellular location is the mitochondrion. It catalyses the reaction citrate = D-threo-isocitrate. The protein operates within carbohydrate metabolism; tricarboxylic acid cycle; isocitrate from oxaloacetate: step 2/2. In terms of biological role, catalyzes the isomerization of citrate to isocitrate via cis-aconitate. The sequence is that of Aconitate hydratase, mitochondrial from Arthroderma benhamiae (strain ATCC MYA-4681 / CBS 112371) (Trichophyton mentagrophytes).